Here is a 449-residue protein sequence, read N- to C-terminus: CBL-interacting protein kinase 31 (449 aa).

Residues 20–275 form the Protein kinase domain; that stretch reads YELGRTIGEG…ISQILEDPWF (256 aa). ATP is bound by residues 26-34 and Lys-49; that span reads IGEGTFAKV. Asp-143 (proton acceptor) is an active-site residue. The interval 161 to 190 is activation loop; the sequence is DFGLSALTEQVKADGLLHTTCGTPNYVAPE. The 25-residue stretch at 313 to 337 folds into the NAF domain; sequence DQPTSMNAFELISLNQALNLDNLFE.

It belongs to the protein kinase superfamily. CAMK Ser/Thr protein kinase family. SNF1 subfamily. In terms of assembly, may interact with CBL3. The cofactor is Mn(2+). In terms of processing, autophosphorylated. As to expression, highly expressed in leaf blade and leaf sheath, but not in other tissues.

It carries out the reaction L-seryl-[protein] + ATP = O-phospho-L-seryl-[protein] + ADP + H(+). The enzyme catalyses L-threonyl-[protein] + ATP = O-phospho-L-threonyl-[protein] + ADP + H(+). Functionally, involved in cold stress tolerance. CIPK serine-threonine protein kinases interact with CBL proteins. Binding of a CBL protein to the regulatory NAF domain of CIPK protein lead to the activation of the kinase in a calcium-dependent manner. This chain is CBL-interacting protein kinase 31 (CIPK31), found in Oryza sativa subsp. japonica (Rice).